The primary structure comprises 292 residues: Secreted frizzled-related protein 2 (292 aa).

Residues 1–20 (MPRRLCALLLLASQCLGSTA) form the signal peptide. The region spanning 32–152 (YKRSNCKPIP…PKDNDLCIPL (121 aa)) is the FZ domain. Disulfide bonds link Cys-37-Cys-100, Cys-47-Cys-93, Cys-84-Cys-122, Cys-111-Cys-149, Cys-115-Cys-139, Cys-169-Cys-242, and Cys-187-Cys-292. The NTR domain maps to 169 to 292 (CDACKNKNED…FSRSIRKLQC (124 aa)).

The protein belongs to the secreted frizzled-related protein (sFRP) family.

It is found in the secreted. Soluble frizzled-related proteins (sFRPS) function as modulators of Wnt signaling through direct interaction with Wnts. They have a role in regulating cell growth and differentiation in specific cell types. SFRP2 appears to be associated with myogenesis. The polypeptide is Secreted frizzled-related protein 2 (SFRP2) (Gallus gallus (Chicken)).